The sequence spans 468 residues: Purple acid phosphatase 10 (468 aa).

Positions 1–25 are cleaved as a signal peptide; it reads MGRVRKSDFGSIVLVLCCVLNSLLC. Residues Asn-95 and Asn-113 are each glycosylated (N-linked (GlcNAc...) asparagine). Fe cation is bound at residue Asp-167. A glycan (N-linked (GlcNAc...) asparagine) is linked at Asn-175. The Fe cation site is built by Asp-196 and Tyr-199. Asp-196 is a binding site for Zn(2+). Residue Asn-233 participates in Zn(2+) binding. Asn-233 contributes to the substrate binding site. N-linked (GlcNAc...) asparagine glycosylation is present at Asn-306. His-318 serves as a coordination point for Zn(2+). His-328 acts as the Proton donor in catalysis. His-355 is a Zn(2+) binding site. 355-357 is a substrate binding site; that stretch reads HVH. Position 357 (His-357) interacts with Fe cation. A glycan (N-linked (GlcNAc...) asparagine) is linked at Asn-428.

It belongs to the metallophosphoesterase superfamily. Purple acid phosphatase family. In terms of assembly, homodimer; disulfide-linked. The cofactor is Fe cation. Zn(2+) is required as a cofactor. Expressed in roots, stems, leaves, flowers and siliques.

The protein resides in the secreted. Its subcellular location is the cytoplasm. The catalysed reaction is a phosphate monoester + H2O = an alcohol + phosphate. In Arabidopsis thaliana (Mouse-ear cress), this protein is Purple acid phosphatase 10 (PAP10).